Consider the following 261-residue polypeptide: Small ribosomal subunit protein eS1A (261 aa).

Residues 1–18 (MTLGKNKRISKGGKRGKK) show a composition bias toward basic residues. Residues 1-23 (MTLGKNKRISKGGKRGKKKTQET) are disordered.

Belongs to the eukaryotic ribosomal protein eS1 family. As to quaternary structure, component of the small ribosomal subunit. Mature ribosomes consist of a small (40S) and a large (60S) subunit. The 40S subunit contains about 33 different proteins and 1 molecule of RNA (18S). The 60S subunit contains about 49 different proteins and 3 molecules of RNA (25S, 5.8S and 5S).

The protein resides in the cytoplasm. This Trypanosoma cruzi (strain CL Brener) protein is Small ribosomal subunit protein eS1A.